A 447-amino-acid polypeptide reads, in one-letter code: MLMNLPEILKNQKARARKFKPVKMSKRTELWYRQQLKQFVKMMTNDVERALQQPQGSFFMDDAKGFQAISAKALMKVLEKYEKSDRTSQAENIANGFVSRGDAQNHAEVSTNLKNQTGIDLSAYLRNSPNITEKVNALTAGNIQLIKSIRSQYLDKVQNAVMQAMVRGSLNKDLAAQIKDLGKTTEKRAMFIARDQSSKLNAALTQARHEEVGIKKYMWSASLDERVRESHAEKDGQIFEYANPPADTDHPGHDFNCRCVQIPVLDNNEQIVKNSPIVSQQEKQQMRSEWSDDFPDTIIDRKLGDATSHPLYENAKKGSIEDAYQLAKDLVTDDAVNKLKQLVGNKNAILIPVHAEEAVGQNMIPVAIATVLSKKLHIPVDLSIVQATKVSRTGGDGWHRLVYSPAFDGIVPKDKYAIILDDTQTQGGTLASLKGYIIKEKLLHLML.

To E.coli plasmid IncP-alpha RP4 protein TraN.

This is an uncharacterized protein from Haemophilus influenzae (strain ATCC 51907 / DSM 11121 / KW20 / Rd).